A 196-amino-acid chain; its full sequence is MIDRLRGQLVEKDPEGVVVDCGGVGYRAAAPLSTLRALPAVGEECVVHTRMVVREDAMLLFGFATREEREAFDALTSVSKVGPRLALAVLSAMTPGQMMEAAARGDVHRFAAVPGLGRKTAERLVLELRGRELAAAGGGGGVAAGEGDGPFMEAREALTGLGYSLEEAERALRDVPPQETVEQYIKAALRKIGGRR.

Residues 1-64 (MIDRLRGQLV…EDAMLLFGFA (64 aa)) are domain I. The domain II stretch occupies residues 65–143 (TREEREAFDA…AAAGGGGGVA (79 aa)). Positions 144 to 153 (AGEGDGPFME) are flexible linker. A domain III region spans residues 153 to 196 (EAREALTGLGYSLEEAERALRDVPPQETVEQYIKAALRKIGGRR).

This sequence belongs to the RuvA family. Homotetramer. Forms an RuvA(8)-RuvB(12)-Holliday junction (HJ) complex. HJ DNA is sandwiched between 2 RuvA tetramers; dsDNA enters through RuvA and exits via RuvB. An RuvB hexamer assembles on each DNA strand where it exits the tetramer. Each RuvB hexamer is contacted by two RuvA subunits (via domain III) on 2 adjacent RuvB subunits; this complex drives branch migration. In the full resolvosome a probable DNA-RuvA(4)-RuvB(12)-RuvC(2) complex forms which resolves the HJ.

It localises to the cytoplasm. Its function is as follows. The RuvA-RuvB-RuvC complex processes Holliday junction (HJ) DNA during genetic recombination and DNA repair, while the RuvA-RuvB complex plays an important role in the rescue of blocked DNA replication forks via replication fork reversal (RFR). RuvA specifically binds to HJ cruciform DNA, conferring on it an open structure. The RuvB hexamer acts as an ATP-dependent pump, pulling dsDNA into and through the RuvAB complex. HJ branch migration allows RuvC to scan DNA until it finds its consensus sequence, where it cleaves and resolves the cruciform DNA. This Rubrobacter xylanophilus (strain DSM 9941 / JCM 11954 / NBRC 16129 / PRD-1) protein is Holliday junction branch migration complex subunit RuvA.